We begin with the raw amino-acid sequence, 251 residues long: DNA repair protein RecO (251 aa).

The protein belongs to the RecO family.

In terms of biological role, involved in DNA repair and RecF pathway recombination. The sequence is that of DNA repair protein RecO from Streptococcus mutans serotype c (strain ATCC 700610 / UA159).